We begin with the raw amino-acid sequence, 272 residues long: Phosphate import ATP-binding protein PstB (272 aa).

One can recognise an ABC transporter domain in the interval 26–267 (LEIRNLDLSY…PRKRKTEDYI (242 aa)). ATP is bound at residue 58 to 65 (GPSGCGKS).

Belongs to the ABC transporter superfamily. Phosphate importer (TC 3.A.1.7) family. In terms of assembly, the complex is composed of two ATP-binding proteins (PstB), two transmembrane proteins (PstC and PstA) and a solute-binding protein (PstS).

The protein localises to the cell inner membrane. It catalyses the reaction phosphate(out) + ATP + H2O = ADP + 2 phosphate(in) + H(+). Its function is as follows. Part of the ABC transporter complex PstSACB involved in phosphate import. Responsible for energy coupling to the transport system. This chain is Phosphate import ATP-binding protein PstB, found in Shewanella denitrificans (strain OS217 / ATCC BAA-1090 / DSM 15013).